A 337-amino-acid chain; its full sequence is Heat-inducible transcription repressor HrcA (337 aa).

The protein belongs to the HrcA family.

Negative regulator of class I heat shock genes (grpE-dnaK-dnaJ and groELS operons). Prevents heat-shock induction of these operons. This chain is Heat-inducible transcription repressor HrcA, found in Kocuria rhizophila (strain ATCC 9341 / DSM 348 / NBRC 103217 / DC2201).